A 281-amino-acid polypeptide reads, in one-letter code: Ribosomal RNA small subunit methyltransferase J (281 aa).

S-adenosyl-L-methionine contacts are provided by residues 129–130, 145–146, and D199; these read RD and ER.

Belongs to the methyltransferase superfamily. RsmJ family.

The protein resides in the cytoplasm. It carries out the reaction guanosine(1516) in 16S rRNA + S-adenosyl-L-methionine = N(2)-methylguanosine(1516) in 16S rRNA + S-adenosyl-L-homocysteine + H(+). Specifically methylates the guanosine in position 1516 of 16S rRNA. The chain is Ribosomal RNA small subunit methyltransferase J from Laribacter hongkongensis (strain HLHK9).